We begin with the raw amino-acid sequence, 360 residues long: Phenylalanine--tRNA ligase alpha subunit (360 aa).

Mg(2+) is bound at residue glutamate 260.

The protein belongs to the class-II aminoacyl-tRNA synthetase family. Phe-tRNA synthetase alpha subunit type 1 subfamily. In terms of assembly, tetramer of two alpha and two beta subunits. The cofactor is Mg(2+).

The protein resides in the cytoplasm. The catalysed reaction is tRNA(Phe) + L-phenylalanine + ATP = L-phenylalanyl-tRNA(Phe) + AMP + diphosphate + H(+). This Bradyrhizobium diazoefficiens (strain JCM 10833 / BCRC 13528 / IAM 13628 / NBRC 14792 / USDA 110) protein is Phenylalanine--tRNA ligase alpha subunit.